Reading from the N-terminus, the 157-residue chain is Siroheme decarboxylase NirG subunit (157 aa).

It belongs to the Ahb/Nir family. In terms of assembly, forms a complex composed of NirDL, NirG and NirH. All proteins are required for the total conversion of siroheme to didecarboxysiroheme.

It carries out the reaction siroheme + 2 H(+) = 12,18-didecarboxysiroheme + 2 CO2. Its pathway is porphyrin-containing compound metabolism. Its function is as follows. Involved in heme d1 biosynthesis. Catalyzes the decarboxylation of siroheme into didecarboxysiroheme. Siroheme is probably decarboxylated to monodecarboxysiroheme, which is in turn decarboxylated to didecarboxysiroheme. The chain is Siroheme decarboxylase NirG subunit from Paracoccus pantotrophus (Thiosphaera pantotropha).